The chain runs to 125 residues: MRKNDFDVREMNAALGILKLAREGRGDSDEPDTRTRKTTFQMMVLKEVFKIAPHPSTLTKADLALMIKLPLKAVQIWFQNERSRKERGGRLGKRTRGGKSESIDPVRLFKVIMKVLEKNREGLGF.

Residues 30-89 constitute a DNA-binding region (homeobox); it reads EPDTRTRKTTFQMMVLKEVFKIAPHPSTLTKADLALMIKLPLKAVQIWFQNERSRKERGG.

The protein resides in the nucleus. The sequence is that of Homeobox protein HD-8 (HD-8) from Encephalitozoon cuniculi (strain GB-M1) (Microsporidian parasite).